The following is a 78-amino-acid chain: UPF0235 protein AF_2072 (78 aa).

The protein belongs to the UPF0235 family.

The protein is UPF0235 protein AF_2072 of Archaeoglobus fulgidus (strain ATCC 49558 / DSM 4304 / JCM 9628 / NBRC 100126 / VC-16).